The following is a 401-amino-acid chain: Homoserine O-acetyltransferase (401 aa).

The 322-residue stretch at 37–358 (NAVLVCHALT…HGHDAFLVEP (322 aa)) folds into the AB hydrolase-1 domain. Ser146 (nucleophile) is an active-site residue. Arg215 is a substrate binding site. Catalysis depends on residues Asp318 and His351. Asp352 is a binding site for substrate.

Belongs to the AB hydrolase superfamily. MetX family. In terms of assembly, homodimer.

It is found in the cytoplasm. It carries out the reaction L-homoserine + acetyl-CoA = O-acetyl-L-homoserine + CoA. Its pathway is amino-acid biosynthesis; L-methionine biosynthesis via de novo pathway; O-acetyl-L-homoserine from L-homoserine: step 1/1. Functionally, transfers an acetyl group from acetyl-CoA to L-homoserine, forming acetyl-L-homoserine. In Natronomonas pharaonis (strain ATCC 35678 / DSM 2160 / CIP 103997 / JCM 8858 / NBRC 14720 / NCIMB 2260 / Gabara) (Halobacterium pharaonis), this protein is Homoserine O-acetyltransferase.